The chain runs to 356 residues: 45 kDa calcium-binding protein (356 aa).

The first 29 residues, 1-29 (MMSRQAFLCSLGSLYLSLLFVFLLMDVYA), serve as a signal peptide directing secretion. N-linked (GlcNAc...) asparagine glycosylation occurs at asparagine 33. EF-hand domains are found at residues 92 to 127 (KNRK…KTDE), 131 to 166 (EAVE…SKGL), 227 to 262 (MLKF…TVEN), 272 to 307 (WVKD…MNEY), and 308 to 343 (NALN…FTGS). Positions 105, 107, 109, 111, 116, 144, 146, 148, 150, 155, 240, 242, 244, 246, 251, 285, 287, 289, 296, 321, 323, 325, 327, and 332 each coordinate Ca(2+).

This sequence belongs to the CREC family.

Its subcellular location is the golgi apparatus lumen. In terms of biological role, may regulate calcium-dependent activities in the endoplasmic reticulum lumen or post-ER compartment. The sequence is that of 45 kDa calcium-binding protein (SDF4) from Gallus gallus (Chicken).